We begin with the raw amino-acid sequence, 316 residues long: tRNA dimethylallyltransferase (316 aa).

Gly-17–Thr-24 is an ATP binding site. Residue Thr-19–Thr-24 participates in substrate binding. Interaction with substrate tRNA stretches follow at residues Asp-42–Leu-45, Gln-166–Arg-170, Arg-247–Arg-252, and Lys-280–Arg-287.

This sequence belongs to the IPP transferase family. As to quaternary structure, monomer. The cofactor is Mg(2+).

It catalyses the reaction adenosine(37) in tRNA + dimethylallyl diphosphate = N(6)-dimethylallyladenosine(37) in tRNA + diphosphate. In terms of biological role, catalyzes the transfer of a dimethylallyl group onto the adenine at position 37 in tRNAs that read codons beginning with uridine, leading to the formation of N6-(dimethylallyl)adenosine (i(6)A). The sequence is that of tRNA dimethylallyltransferase from Enterobacter sp. (strain 638).